Here is a 501-residue protein sequence, read N- to C-terminus: Bifunctional purine biosynthesis protein PurH (501 aa).

An MGS-like domain is found at 1 to 144 (MKKRALISVF…KNFQDVVVIS (144 aa)).

It belongs to the PurH family.

It carries out the reaction (6R)-10-formyltetrahydrofolate + 5-amino-1-(5-phospho-beta-D-ribosyl)imidazole-4-carboxamide = 5-formamido-1-(5-phospho-D-ribosyl)imidazole-4-carboxamide + (6S)-5,6,7,8-tetrahydrofolate. The enzyme catalyses IMP + H2O = 5-formamido-1-(5-phospho-D-ribosyl)imidazole-4-carboxamide. Its pathway is purine metabolism; IMP biosynthesis via de novo pathway; 5-formamido-1-(5-phospho-D-ribosyl)imidazole-4-carboxamide from 5-amino-1-(5-phospho-D-ribosyl)imidazole-4-carboxamide (10-formyl THF route): step 1/1. It functions in the pathway purine metabolism; IMP biosynthesis via de novo pathway; IMP from 5-formamido-1-(5-phospho-D-ribosyl)imidazole-4-carboxamide: step 1/1. The protein is Bifunctional purine biosynthesis protein PurH of Clostridium botulinum (strain Eklund 17B / Type B).